We begin with the raw amino-acid sequence, 500 residues long: L-arabinose isomerase (500 aa).

Mn(2+) contacts are provided by glutamate 306, glutamate 333, histidine 349, and histidine 448.

Belongs to the arabinose isomerase family. Requires Mn(2+) as cofactor.

It catalyses the reaction beta-L-arabinopyranose = L-ribulose. The protein operates within carbohydrate degradation; L-arabinose degradation via L-ribulose; D-xylulose 5-phosphate from L-arabinose (bacterial route): step 1/3. Catalyzes the conversion of L-arabinose to L-ribulose. The protein is L-arabinose isomerase of Cellvibrio japonicus (strain Ueda107) (Pseudomonas fluorescens subsp. cellulosa).